An 80-amino-acid chain; its full sequence is Exodeoxyribonuclease 7 small subunit (80 aa).

This sequence belongs to the XseB family. In terms of assembly, heterooligomer composed of large and small subunits.

Its subcellular location is the cytoplasm. The enzyme catalyses Exonucleolytic cleavage in either 5'- to 3'- or 3'- to 5'-direction to yield nucleoside 5'-phosphates.. Its function is as follows. Bidirectionally degrades single-stranded DNA into large acid-insoluble oligonucleotides, which are then degraded further into small acid-soluble oligonucleotides. The chain is Exodeoxyribonuclease 7 small subunit from Vibrio campbellii (strain ATCC BAA-1116).